The chain runs to 74 residues: Translation initiation factor IF-1 2 (74 aa).

One can recognise an S1-like domain in the interval 1–73; it reads MTKNKNVIEV…TRGRIVFRYR (73 aa).

It belongs to the IF-1 family. In terms of assembly, component of the 30S ribosomal translation pre-initiation complex which assembles on the 30S ribosome in the order IF-2 and IF-3, IF-1 and N-formylmethionyl-tRNA(fMet); mRNA recruitment can occur at any time during PIC assembly.

Its subcellular location is the cytoplasm. One of the essential components for the initiation of protein synthesis. Stabilizes the binding of IF-2 and IF-3 on the 30S subunit to which N-formylmethionyl-tRNA(fMet) subsequently binds. Helps modulate mRNA selection, yielding the 30S pre-initiation complex (PIC). Upon addition of the 50S ribosomal subunit IF-1, IF-2 and IF-3 are released leaving the mature 70S translation initiation complex. In Streptomyces avermitilis (strain ATCC 31267 / DSM 46492 / JCM 5070 / NBRC 14893 / NCIMB 12804 / NRRL 8165 / MA-4680), this protein is Translation initiation factor IF-1 2.